The primary structure comprises 387 residues: Succinate--CoA ligase [ADP-forming] subunit beta (387 aa).

ATP is bound by residues K46, 53 to 55 (GRG), E99, C102, and E107. The Mg(2+) site is built by N196 and D210. Substrate is bound by residues N261 and 318–320 (GIV).

The protein belongs to the succinate/malate CoA ligase beta subunit family. As to quaternary structure, heterotetramer of two alpha and two beta subunits. Mg(2+) serves as cofactor.

The enzyme catalyses succinate + ATP + CoA = succinyl-CoA + ADP + phosphate. It catalyses the reaction GTP + succinate + CoA = succinyl-CoA + GDP + phosphate. Its pathway is carbohydrate metabolism; tricarboxylic acid cycle; succinate from succinyl-CoA (ligase route): step 1/1. Succinyl-CoA synthetase functions in the citric acid cycle (TCA), coupling the hydrolysis of succinyl-CoA to the synthesis of either ATP or GTP and thus represents the only step of substrate-level phosphorylation in the TCA. The beta subunit provides nucleotide specificity of the enzyme and binds the substrate succinate, while the binding sites for coenzyme A and phosphate are found in the alpha subunit. The chain is Succinate--CoA ligase [ADP-forming] subunit beta from Campylobacter hominis (strain ATCC BAA-381 / DSM 21671 / CCUG 45161 / LMG 19568 / NCTC 13146 / CH001A).